Reading from the N-terminus, the 148-residue chain is Small ribosomal subunit protein eS6 (148 aa).

Belongs to the eukaryotic ribosomal protein eS6 family.

The polypeptide is Small ribosomal subunit protein eS6 (Pyrobaculum islandicum (strain DSM 4184 / JCM 9189 / GEO3)).